A 953-amino-acid chain; its full sequence is Coatomer subunit beta (953 aa).

T2 carries the post-translational modification N-acetylthreonine. HEAT repeat units lie at residues 96–131, 132–168, 240–276, 277–314, 316–353, and 396–433; these read HEMI…KEAE, LLEP…NFEN, SERA…SAPT, AIKA…HPAH, RVLQ…SRNV, and DMAA…RFDN. N6-acetyllysine is present on K494.

Oligomeric complex that consists of at least the alpha, beta, beta', gamma, delta, epsilon and zeta subunits. Interacts with SCYL1. Interacts with CAPN8. Interacts with COPG1. Interacts with ARF1 (myristoylated); this interaction is required for binding of COPB1 to Golgi membranes. Interacts (via trunk domain) with ARF1 (via switch I region); the interaction is direct. Interacts with KCNK2 (via N-terminus); this interaction increases the channel-mediated whole cell currents and promotes plasma membrane expression of KCNK2. Interacts with PRKCE. Interacts with STX17. Interacts with TMEM115. Interacts with TMEM41B. Post-translationally, proteolytically cleaved between Ser-528 and Ser-529 by CAPN8.

It localises to the cytoplasm. It is found in the golgi apparatus membrane. The protein localises to the cytoplasmic vesicle. The protein resides in the COPI-coated vesicle membrane. Its subcellular location is the cell membrane. It localises to the endoplasmic reticulum-Golgi intermediate compartment. It is found in the microsome membrane. Functionally, the coatomer is a cytosolic protein complex that binds to dilysine motifs and reversibly associates with Golgi non-clathrin-coated vesicles, which further mediate biosynthetic protein transport from the ER, via the Golgi up to the trans Golgi network. Coatomer complex is required for budding from Golgi membranes, and is essential for the retrograde Golgi-to-ER transport of dilysine-tagged proteins. In mammals, the coatomer can only be recruited by membranes associated to ADP-ribosylation factors (ARFs), which are small GTP-binding proteins; the complex also influences the Golgi structural integrity, as well as the processing, activity, and endocytic recycling of LDL receptors. Involved in the Golgi disassembly and reassembly processes during cell cycle. Involved in autophagy by playing a role in early endosome function. Plays a role in organellar compartmentalization of secretory compartments including endoplasmic reticulum (ER)-Golgi intermediate compartment (ERGIC), Golgi, trans-Golgi network (TGN) and recycling endosomes, and in biosynthetic transport of CAV1. Plays a functional role in facilitating the transport of kappa-type opioid receptor mRNAs into axons and enhances translation of these proteins in the axonal compartment of dorsal root ganglion (DRG) cells. Required for limiting lipid storage in lipid droplets. Involved in lipid homeostasis by regulating the presence of perilipin family members PLIN2 and PLIN3 at the lipid droplet surface and promoting the association of adipocyte triglyceride lipase (PNPLA2) with the lipid droplet surface to mediate lipolysis. This Rattus norvegicus (Rat) protein is Coatomer subunit beta (Copb1).